Reading from the N-terminus, the 90-residue chain is DNA-binding protein HU-alpha (90 aa).

This sequence belongs to the bacterial histone-like protein family. As to quaternary structure, heterodimer of an alpha and a beta chain.

In terms of biological role, histone-like DNA-binding protein which is capable of wrapping DNA to stabilize it, and thus to prevent its denaturation under extreme environmental conditions. This is DNA-binding protein HU-alpha (hupA) from Serratia marcescens.